Consider the following 324-residue polypeptide: MIVRSQIIGCGSYLPSRLVTNAELAAQVDTSDEWIVERSGIRQRHIAAEGETTSDLATNAALRALEAAGISGSAVDLVIVATATPDNTFPATATKVQSRIGMRHGFAFDVQAVCSGFVYALSVADNFIKSGQVQTALVIGAETFSRILDWTDRTTCVLFGDGAGAVVLRASRGKGSSADRGILSTHLHSDGSHYDLLYVDGGPSSTQTVGHVHMEGREVFRHAVINLAAVVGEALAANDLKASDIDWVVPHQANRRIIEGTAKKLGFPLDKMVMTVERHANTSAASIPLALTEAVGDGRIKPGQLVLLEAMGGGFTWGSALVRM.

Catalysis depends on residues cysteine 114 and histidine 251. The tract at residues 252–256 is ACP-binding; sequence QANRR. Asparagine 281 is an active-site residue.

It belongs to the thiolase-like superfamily. FabH family. In terms of assembly, homodimer.

It localises to the cytoplasm. It catalyses the reaction malonyl-[ACP] + acetyl-CoA + H(+) = 3-oxobutanoyl-[ACP] + CO2 + CoA. The protein operates within lipid metabolism; fatty acid biosynthesis. Its function is as follows. Catalyzes the condensation reaction of fatty acid synthesis by the addition to an acyl acceptor of two carbons from malonyl-ACP. Catalyzes the first condensation reaction which initiates fatty acid synthesis and may therefore play a role in governing the total rate of fatty acid production. Possesses both acetoacetyl-ACP synthase and acetyl transacylase activities. Its substrate specificity determines the biosynthesis of branched-chain and/or straight-chain of fatty acids. The sequence is that of Beta-ketoacyl-[acyl-carrier-protein] synthase III from Paramagnetospirillum magneticum (strain ATCC 700264 / AMB-1) (Magnetospirillum magneticum).